We begin with the raw amino-acid sequence, 50 residues long: Nosiheptide precursor (50 aa).

A cross-link (thiazole-4-carboxylic acid (Ser-Cys)) is located at residues 38 to 39 (SC). Positions 38 to 46 (SCTTCECCC) form a cross-link, 3-hydroxypyridine-2,5-dicarboxylic acid (Ser-Cys) (with S-47). The segment at residues 38–47 (SCTTCECCCS) is a cross-link (3-hydroxypyridine-2,5-dicarboxylic acid (Ser-Ser) (with C-46)). A cross-link (thiazole-4-carboxylic acid (Thr-Cys)) is located at residues 41 to 42 (TC). E43 is subject to 4-hydroxyglutamate. Positions 43 to 44 (EC) form a cross-link, thiazole-4-carboxylic acid (Glu-Cys). The 2-(cystein-S-ylcarbonyl)-3-methyl-4-(glutam-5-yloxy)methylindole (Glu-Cys) cross-link spans 43 to 45 (ECC). Positions 45–46 (CC) form a cross-link, thiazole-4-carboxylic acid (Cys-Cys). Residues 47 to 48 (SC) constitute a cross-link (thiazole-4-carboxylic acid (Ser-Cys)). Position 49 is a 2,3-didehydroalanine (Ser) (S49). S49 is modified (serine amide; atypical).

This sequence belongs to the thiocillin family. In terms of processing, the amidation of Ser-49 is produced by the oxidative cleavage of Ser-50 rather than of a glycine, as in eukaryotes.

In terms of biological role, inhibits bacterial protein biosynthesis by binding to ribosomes. Specifically, binds to the complex of 23S rRNA and ribosomal protein L11 (RPLK) in the 50S ribosomal subunit. While allowing a weak binding of elongation factor G (EF-G) to the ribosome and subsequent GTP-hydrolysis, probably impairs conformational changes in both the ribosome and EF-G which are necessary for translocation. In vitro, inhibits Gram-positive bacteria S.aureus strain 209P (MIC=0.0009 ug/ml), S.aureus strain 133 (MIC=0.0019 ug/ml), S.aureus strain B3 (MIC=0.003 ug/ml), S.aureus strain Hb (MIC=0.003 ug/ml), M.citreus strain ATCC 8411 (MIC=0.0038 ug/ml), M.lysodeikticus strain ATCC 4698 (MIC=0.003 ug/ml), S.lutea strain ATCC 9341 (MIC=0.0011 ug/ml), S.faecalis strain ATCC 9790 (MIC=0.0007 ug/ml), S.viridans (MIC=0.0065 ug/ml), S.pyogenes hemolyticus strain Dig7 (MIC=0.00028 ug/ml), D.pneumoniae strain Til (MIC=0.00015 ug/ml), N.catrrhalis (MIC=0.0017 ug/ml), L.casei strain ATCC 6633 (MIC=0.003 ug/ml), B.cereus strain ATCC 6630 (MIC=0.0071 ug/ml) and various isolates of L.monocytogenes. In vitro, inhibits Gram-negative bacterium P.multocida strain A125 (MIC=0.0024 ug/ml) but not M.smegmatis strain ATCC 6630, S.typhimurium, A.aerogenes strain ATCC 8308, P.vulgaris, K.pneumoniae strain ATCC 10031, S.marcescens strain A476, P.aeruginosa strain Bass or B.bronchiseptica strain CN387. Does not inhibit Gram-negative bacterium E.coli strain ATCC 9637 but does inhibit purified ribosomes from E.coli. In vivo, has no systemic effect in mice infected with staphylococci or streptococci when applied orally or subcutaneously. Has a local effect in mice infected subcutaneously or intraperitoneally with staphylococci when applied immediately afterwards. Is not toxic to mice. This is Nosiheptide precursor from Streptomyces actuosus.